A 636-amino-acid polypeptide reads, in one-letter code: TNFAIP3-interacting protein 1 (636 aa).

Residues 20–73 are a coiled coil; sequence EASAAFERLVKENSRLKEKMQGIKMLGELLEESQMEATRLRQKAEELVKDNELL. Positions 61–71 are enriched in basic and acidic residues; that stretch reads QKAEELVKDNE. 2 disordered regions span residues 61-151 and 252-283; these read QKAE…GPLP and MSNGNKEGASGRPGSPKMEGTGKKAVAGQQQA. Ser77 is modified (phosphoserine). Positions 94-412 are interaction with Nef; sequence SNVTASPTAP…SPLTRQREYQ (319 aa). Positions 131 to 142 are enriched in polar residues; sequence EEQNSPESSSHA. The stretch at 196–258 forms a coiled coil; the sequence is SKVHKNEQRT…KLLMSNGNKE (63 aa). Ser284 is subject to Phosphoserine. Residues 294–535 adopt a coiled-coil conformation; it reads VALGAAEKKV…RKAKASGERY (242 aa). Positions 351–367 are interaction with Shigella flexneri ipah9.8; that stretch reads DLEAEREQKQRDFDRKL. Residue Ser403 is modified to Phosphoserine. Residues 431-588 are required for inhibitory activity of TNF-induced NF-kappa-B activation; that stretch reads TPPSSPPTAF…MEHPPPLPNS (158 aa). At Thr438 the chain carries Phosphothreonine. Ser442 carries the post-translational modification Phosphoserine. The interval 452–510 is ubiquitin-binding domain (UBD); sequence KQELVTQNELLKQQVKIFEEDFQRERSDRERMNEEKEELKKQVEKLQAQVTLSNAQLKA. Residues 524–530 carry the Nuclear localization signal motif; sequence QKRKAKA. Tyr552 bears the Phosphotyrosine mark. Asymmetric dimethylarginine is present on Arg571. Position 599 is an asymmetric dimethylarginine; alternate (Arg599). Arg599 is subject to Omega-N-methylarginine; alternate. The tract at residues 603 to 636 is disordered; sequence GGVRNPNQSSQVMDPPTARPTEPESPKNDREGPQ. Positions 623 to 636 are enriched in basic and acidic residues; it reads TEPESPKNDREGPQ. A Phosphoserine modification is found at Ser627.

In terms of assembly, interacts with TNFAIP3 and IKBKG (polyubiquitinated); facilitates TNFAIP3-mediated de-ubiquitination of NEMO/IKBKG. Interacts with polyubiquitin. Interacts with MAPK1, SELPLG and PIK3CD. Interacts with IRAK1 (polyubiquitinated). Interacts with MYD88; the interaction is indicative for participation in an activated TLR-signaling complex. Interacts with HIV-1 matrix protein. Interacts with TAX1BP1. (Microbial infection) Interacts with Shigella flexneri ipah9.8; the interaction promotes polyubiquitination of IKBKG. Phosphorylation at Tyr-552 by SRC-family kinases recruits phosphoinositide-3-kinase (PI3K) PIK3CD:p85 heterodimer which results in integrin activation and leukocyte adhesion to activated endothelium during inflammation. As to expression, ubiquitous. Strongly expressed in peripheral blood lymphocytes, spleen and skeletal muscle, and is weakly expressed in the brain. In peripheral blood mononucleocytes, isoform 4 is mainly expressed and isoform 1 and isoform 7 are almost not expressed. Expression of isoform 1 and isoform 7 increases in leukemic cells.

The protein localises to the cytoplasm. The protein resides in the nucleus. Its function is as follows. Inhibits NF-kappa-B activation and TNF-induced NF-kappa-B-dependent gene expression by regulating TAX1BP1 and A20/TNFAIP3-mediated deubiquitination of IKBKG; proposed to link A20/TNFAIP3 to ubiquitinated IKBKG. Involved in regulation of EGF-induced ERK1/ERK2 signaling pathway; blocks MAPK3/MAPK1 nuclear translocation and MAPK1-dependent transcription. Increases cell surface CD4(T4) antigen expression. Involved in the anti-inflammatory response of macrophages and positively regulates TLR-induced activation of CEBPB. Involved in the prevention of autoimmunity; this function implicates binding to polyubiquitin. Involved in leukocyte integrin activation during inflammation; this function is mediated by association with SELPLG and dependent on phosphorylation by SRC-family kinases. Interacts with HIV-1 matrix protein and is packaged into virions and overexpression can inhibit viral replication. May regulate matrix nuclear localization, both nuclear import of PIC (Preintegration complex) and export of GAG polyprotein and viral genomic RNA during virion production. In case of infection, promotes association of IKBKG with Shigella flexneri E3 ubiquitin-protein ligase ipah9.8 p which in turn promotes polyubiquitination of IKBKG leading to its proteasome-dependent degradation and thus is perturbing NF-kappa-B activation during bacterial infection. The polypeptide is TNFAIP3-interacting protein 1 (TNIP1) (Homo sapiens (Human)).